Reading from the N-terminus, the 530-residue chain is Glucose-6-phosphate 1-dehydrogenase (530 aa).

NADP(+)-binding positions include 53 to 60 (GASGDLAK), Arg87, Tyr162, and Lys186. D-glucose 6-phosphate contacts are provided by residues Lys186, 216–220 (HYLGK), Glu254, and Asp273. The active-site Proton acceptor is the His278. Position 372 (Arg372) interacts with NADP(+). D-glucose 6-phosphate is bound by residues Lys375 and Arg380. The NADP(+) site is built by Lys381, Arg385, and Arg408. Position 410 (Gln410) interacts with D-glucose 6-phosphate. NADP(+) contacts are provided by residues 416–418 (YAK), 436–438 (DLT), Arg502, Tyr518, and Trp524.

Belongs to the glucose-6-phosphate dehydrogenase family.

It is found in the cytoplasm. Its subcellular location is the cytosol. It carries out the reaction D-glucose 6-phosphate + NADP(+) = 6-phospho-D-glucono-1,5-lactone + NADPH + H(+). The protein operates within carbohydrate degradation; pentose phosphate pathway; D-ribulose 5-phosphate from D-glucose 6-phosphate (oxidative stage): step 1/3. Functionally, cytosolic glucose-6-phosphate dehydrogenase that catalyzes the first and rate-limiting step of the oxidative branch within the pentose phosphate pathway/shunt, an alternative route to glycolysis for the dissimilation of carbohydrates and a major source of reducing power and metabolic intermediates for fatty acid and nucleic acid biosynthetic processes. This chain is Glucose-6-phosphate 1-dehydrogenase (g6pd), found in Takifugu rubripes (Japanese pufferfish).